Reading from the N-terminus, the 557-residue chain is Formate--tetrahydrofolate ligase (557 aa).

65 to 72 serves as a coordination point for ATP; the sequence is TPAGEGKT.

Belongs to the formate--tetrahydrofolate ligase family. Homotetramer.

The catalysed reaction is (6S)-5,6,7,8-tetrahydrofolate + formate + ATP = (6R)-10-formyltetrahydrofolate + ADP + phosphate. The protein operates within one-carbon metabolism; tetrahydrofolate interconversion. The chain is Formate--tetrahydrofolate ligase (fhs) from Methylorubrum extorquens (strain ATCC 14718 / DSM 1338 / JCM 2805 / NCIMB 9133 / AM1) (Methylobacterium extorquens).